Here is a 417-residue protein sequence, read N- to C-terminus: Argininosuccinate synthase (417 aa).

Position 9-17 (9-17) interacts with ATP; it reads AYSGGLDTS. Tyr87 is a binding site for L-citrulline. Position 117 (Gly117) interacts with ATP. Positions 119, 123, and 124 each coordinate L-aspartate. Asn123 is a binding site for L-citrulline. Residues Arg127, Ser175, Ser184, Glu260, and Tyr272 each coordinate L-citrulline.

The protein belongs to the argininosuccinate synthase family. Type 1 subfamily. As to quaternary structure, homotetramer.

It localises to the cytoplasm. The catalysed reaction is L-citrulline + L-aspartate + ATP = 2-(N(omega)-L-arginino)succinate + AMP + diphosphate + H(+). It functions in the pathway amino-acid biosynthesis; L-arginine biosynthesis; L-arginine from L-ornithine and carbamoyl phosphate: step 2/3. This Oceanobacillus iheyensis (strain DSM 14371 / CIP 107618 / JCM 11309 / KCTC 3954 / HTE831) protein is Argininosuccinate synthase.